The following is a 295-amino-acid chain: Bifunctional protein FolD (295 aa).

Residues 166-168, serine 195, and isoleucine 236 contribute to the NADP(+) site; that span reads GRS.

The protein belongs to the tetrahydrofolate dehydrogenase/cyclohydrolase family. As to quaternary structure, homodimer.

The catalysed reaction is (6R)-5,10-methylene-5,6,7,8-tetrahydrofolate + NADP(+) = (6R)-5,10-methenyltetrahydrofolate + NADPH. The enzyme catalyses (6R)-5,10-methenyltetrahydrofolate + H2O = (6R)-10-formyltetrahydrofolate + H(+). The protein operates within one-carbon metabolism; tetrahydrofolate interconversion. In terms of biological role, catalyzes the oxidation of 5,10-methylenetetrahydrofolate to 5,10-methenyltetrahydrofolate and then the hydrolysis of 5,10-methenyltetrahydrofolate to 10-formyltetrahydrofolate. The sequence is that of Bifunctional protein FolD from Prosthecochloris aestuarii (strain DSM 271 / SK 413).